Reading from the N-terminus, the 194-residue chain is RNA pyrophosphohydrolase (194 aa).

The region spanning 6–149 (GFRPNVGIIL…KRDVYQRALQ (144 aa)) is the Nudix hydrolase domain. The short motif at 38-59 (GGIKFGETPEQAMYRELEEEVG) is the Nudix box element. Residues 158-194 (PTQHVPPQHNTARYLRQTHASRKPDEPSTEKTKPDNE) are disordered. Residues 179-194 (RKPDEPSTEKTKPDNE) are compositionally biased toward basic and acidic residues.

This sequence belongs to the Nudix hydrolase family. RppH subfamily. The cofactor is a divalent metal cation.

In terms of biological role, accelerates the degradation of transcripts by removing pyrophosphate from the 5'-end of triphosphorylated RNA, leading to a more labile monophosphorylated state that can stimulate subsequent ribonuclease cleavage. This Janthinobacterium sp. (strain Marseille) (Minibacterium massiliensis) protein is RNA pyrophosphohydrolase.